Here is a 148-residue protein sequence, read N- to C-terminus: Putative transmembrane protein ORF23 (148 aa).

Residues 1-18 (MVIILLGVSIVVPGLFLA) form the signal peptide. Topologically, residues 19–118 (TETPQTNTFE…YVGWPSGAET (100 aa)) are extracellular. Residues 119–139 (IITNIADIIIMATAVMIIGAI) form a helical membrane-spanning segment. The Cytoplasmic portion of the chain corresponds to 140–148 (YTGYKVSIK).

It is found in the host membrane. The chain is Putative transmembrane protein ORF23 from His1 virus (isolate Australia/Victoria) (His1V).